A 408-amino-acid chain; its full sequence is 3-ketoacyl-CoA thiolase A, peroxisomal (408 aa).

Cys-112 (acyl-thioester intermediate) is an active-site residue. Active-site proton acceptor residues include His-366 and Cys-394.

This sequence belongs to the thiolase-like superfamily. Thiolase family. In terms of assembly, homodimer.

The protein resides in the peroxisome. It carries out the reaction an acyl-CoA + acetyl-CoA = a 3-oxoacyl-CoA + CoA. The protein operates within lipid metabolism; fatty acid metabolism. This Candida tropicalis (Yeast) protein is 3-ketoacyl-CoA thiolase A, peroxisomal.